A 531-amino-acid chain; its full sequence is MKNLLRAINPLNRPQTERLDERQVRNNAGGFVYTVSDESRLTRFLVLGVDGGTFYASAQKHTVQATDFVRELVQRDAALALRVTLDVVRGQRAPKADPALLVLALIAKTAPNAADRKAAWDALPEVARTGTMLLHFLAFADALGGWGRLTRRGVANVYETADVDKLALWAVKYKARDGWSQADALRKAHPKTDDAARNAVLKFMVDGVLPKVDSPALRVIEGHLKATEAQTDAAAAALMQEYRLPLEAVPTHVRGAEVYRAAMQTNGLTWLLRNLGNLGRVGVLTPNDSATVQAVIERLTDPAALKRGRIHPLDALKARLVYAQGQGVRGKGTWLPVPRVVDALEEAFTLAFGNVQPANTRHLLALDVSGSMTCGDVAGVPGLTPNMAAAAMSLIALRTEPDALTMGFAEQFRPLGITPRDTLESAMQKAQSMSFGGTDCAQPILWAAQERLDVDTFVVYTDNETWAGQVHPTVALDQYAQKMGRAPKLIVVGLTATEFSIADPQRRDMLDVVGFDAAAPNVMTAFARGEV.

The 337-residue stretch at 24–360 folds into the TROVE domain; that stretch reads VRNNAGGFVY…AFGNVQPANT (337 aa). Residues 128-274 are RNA-binding; the sequence is RTGTMLLHFL…TNGLTWLLRN (147 aa). The VWFA-like domain stretch occupies residues 352–531; that stretch reads FGNVQPANTR…VMTAFARGEV (180 aa). A divalent metal cation-binding residues include serine 369, serine 371, and threonine 438.

This sequence belongs to the Ro 60 kDa family. Forms oligomers upon binding DrY RNA, The multimers are of an average size of 700 kDa and are composed of around 12 molecules of Rsr-DrY RNA.

The protein localises to the cytoplasm. Its function is as follows. Binds to several small RNAs that accumulate during recovery from UV irradiation. Contributes to the resistance of D.radiodurans to ultraviolet irradiation. The polypeptide is RNA-binding protein RO60 (Deinococcus radiodurans (strain ATCC 13939 / DSM 20539 / JCM 16871 / CCUG 27074 / LMG 4051 / NBRC 15346 / NCIMB 9279 / VKM B-1422 / R1)).